The chain runs to 66 residues: Large ribosomal subunit protein bL31 (66 aa).

Residues Cys16, Cys18, Cys36, and Cys39 each contribute to the Zn(2+) site.

Belongs to the bacterial ribosomal protein bL31 family. Type A subfamily. In terms of assembly, part of the 50S ribosomal subunit. Zn(2+) serves as cofactor.

Binds the 23S rRNA. The chain is Large ribosomal subunit protein bL31 from Sulfurimonas denitrificans (strain ATCC 33889 / DSM 1251) (Thiomicrospira denitrificans (strain ATCC 33889 / DSM 1251)).